A 73-amino-acid chain; its full sequence is ASEPAPACVVMYESWRYTTAANNCADTVSVSVAYQDGATGPCATLPPGAVTTVGEGYLGEHGHPDHLALCPSS.

Intrachain disulfides connect cysteine 8/cysteine 24 and cysteine 42/cysteine 70.

Its function is as follows. Inhibits mammalian alpha-amylases specifically but has no action on plant and microbial alpha-amylases. This Streptomyces olivaceoviridis (Streptomyces corchorusii) protein is Alpha-amylase inhibitor Paim-1.